The sequence spans 39 residues: Cytochrome b559 subunit beta (39 aa).

A helical membrane pass occupies residues 14-30 (WLAVHGLAIPTVSFLGS). His-18 is a binding site for heme.

It belongs to the PsbE/PsbF family. As to quaternary structure, heterodimer of an alpha subunit and a beta subunit. PSII is composed of 1 copy each of membrane proteins PsbA, PsbB, PsbC, PsbD, PsbE, PsbF, PsbH, PsbI, PsbJ, PsbK, PsbL, PsbM, PsbT, PsbX, PsbY, PsbZ, Psb30/Ycf12, at least 3 peripheral proteins of the oxygen-evolving complex and a large number of cofactors. It forms dimeric complexes. Heme b is required as a cofactor.

It localises to the plastid. It is found in the chloroplast thylakoid membrane. Its function is as follows. This b-type cytochrome is tightly associated with the reaction center of photosystem II (PSII). PSII is a light-driven water:plastoquinone oxidoreductase that uses light energy to abstract electrons from H(2)O, generating O(2) and a proton gradient subsequently used for ATP formation. It consists of a core antenna complex that captures photons, and an electron transfer chain that converts photonic excitation into a charge separation. In Beta vulgaris (Sugar beet), this protein is Cytochrome b559 subunit beta.